Consider the following 360-residue polypeptide: Phospho-N-acetylmuramoyl-pentapeptide-transferase (360 aa).

A run of 11 helical transmembrane segments spans residues 2-22 (LVWV…FQYL), 26-46 (AILG…VMIR), 73-93 (TMGG…WADL), 97-117 (YVLI…VDDW), 134-154 (YFWQ…TAHL), 168-188 (ITLA…VGGS), 199-219 (GLAI…AYLS), 236-256 (TGEL…FLWF), 263-283 (VFMG…VAVI), 288-308 (LVFF…ILQV), and 339-359 (IVRF…TLKI).

The protein belongs to the glycosyltransferase 4 family. MraY subfamily. Mg(2+) is required as a cofactor.

It localises to the cell inner membrane. The catalysed reaction is UDP-N-acetyl-alpha-D-muramoyl-L-alanyl-gamma-D-glutamyl-meso-2,6-diaminopimeloyl-D-alanyl-D-alanine + di-trans,octa-cis-undecaprenyl phosphate = di-trans,octa-cis-undecaprenyl diphospho-N-acetyl-alpha-D-muramoyl-L-alanyl-D-glutamyl-meso-2,6-diaminopimeloyl-D-alanyl-D-alanine + UMP. The protein operates within cell wall biogenesis; peptidoglycan biosynthesis. Functionally, catalyzes the initial step of the lipid cycle reactions in the biosynthesis of the cell wall peptidoglycan: transfers peptidoglycan precursor phospho-MurNAc-pentapeptide from UDP-MurNAc-pentapeptide onto the lipid carrier undecaprenyl phosphate, yielding undecaprenyl-pyrophosphoryl-MurNAc-pentapeptide, known as lipid I. The polypeptide is Phospho-N-acetylmuramoyl-pentapeptide-transferase (Hahella chejuensis (strain KCTC 2396)).